The following is a 478-amino-acid chain: MDTSDLFASCRKGDVGRVRYLLEQRDVEVNVRDKWDSTPLYYACLCGHEELVRYLLANGARCEANTFDGERCLYGALSDPIRRALRDYKQVTASCRRRDYYDDFLQRLLEQGIHSDVVFVVHGKPFRAHRCILGARSTYFANMLDTKWKGKSVVVLRHPLINPVAFGALLQYLYTGRLDIGVEHVSDCERLAKQCQLWDLLDDLEAKCEKVSEFVASKPGTCVKVLTIEPPPADPRLRADMALLADCALPSELRGDLGELPFPCPDGFSSCPDICFRVADSSFLCHKAFFCGRSDYFRALLDDHFQESEEPAASGDPPVVTLHDISPDIFIHVLYYVYSDHTELPPELAYDVLSVADMYLLPGLKRLCGRSLAQLLEEDSVVGVWRIAKMFRLARLEDQCTEYMAKVIEKLVEREDFVEAVREEAAAVAARQETDSIPLVDDIRFHVASTVQTYSAIEEAQQRLRALEDLLVSIGLDC.

ANK repeat units follow at residues 1–31 (MDTS…EVNV) and 35–64 (WDST…RCEA). BTB domains lie at 115–182 (SDVV…DIGV) and 272–346 (PDIC…ELPP). Residues 451–477 (VQTYSAIEEAQQRLRALEDLLVSIGLD) are a coiled coil.

Its subcellular location is the cytoplasm. May act as a mediator of the PTEN growth-suppressive signaling pathway. May play a role in developmental processes. In Mus musculus (Mouse), this protein is Ankyrin repeat and BTB/POZ domain-containing protein 1.